A 574-amino-acid chain; its full sequence is Membrane protein insertase YidC (574 aa).

The helical transmembrane segment at 6–26 (VFLIFAWLMVAALLWMEWGKE) threads the bilayer. The segment at 65 to 85 (QAGAPGKVPATSTTTATPAAA) is disordered. 5 helical membrane-spanning segments follow: residues 350-370 (VIDYSRFSIMAIIGQGLFWVL), 376-396 (FLHNWGWAIVGLVVLLRLVLY), 447-467 (GGCLPLLIQMPIFFALYWVLV), 491-511 (FILPALNIAIMWATQKLTPTP), and 525-545 (PLVFGAMMAFVPSGLVLYWVV).

Belongs to the OXA1/ALB3/YidC family. Type 1 subfamily. As to quaternary structure, interacts with the Sec translocase complex via SecD. Specifically interacts with transmembrane segments of nascent integral membrane proteins during membrane integration.

It localises to the cell inner membrane. Required for the insertion and/or proper folding and/or complex formation of integral membrane proteins into the membrane. Involved in integration of membrane proteins that insert both dependently and independently of the Sec translocase complex, as well as at least some lipoproteins. Aids folding of multispanning membrane proteins. The sequence is that of Membrane protein insertase YidC from Xanthomonas oryzae pv. oryzae (strain PXO99A).